Reading from the N-terminus, the 236-residue chain is Phosphoribosylaminoimidazole-succinocarboxamide synthase (236 aa).

It belongs to the SAICAR synthetase family.

It carries out the reaction 5-amino-1-(5-phospho-D-ribosyl)imidazole-4-carboxylate + L-aspartate + ATP = (2S)-2-[5-amino-1-(5-phospho-beta-D-ribosyl)imidazole-4-carboxamido]succinate + ADP + phosphate + 2 H(+). It participates in purine metabolism; IMP biosynthesis via de novo pathway; 5-amino-1-(5-phospho-D-ribosyl)imidazole-4-carboxamide from 5-amino-1-(5-phospho-D-ribosyl)imidazole-4-carboxylate: step 1/2. The polypeptide is Phosphoribosylaminoimidazole-succinocarboxamide synthase (Rickettsia massiliae (strain Mtu5)).